Here is a 336-residue protein sequence, read N- to C-terminus: Cytoplasmic envelopment protein 2 (336 aa).

The segment at 67–69 (KKK) is interaction with host BBLF1.

The protein belongs to the herpesviridae cytoplasmic envelopment protein 2 family. Homodimer. Interacts with BBLF1. Interacts with the capsid. Interacts with BKRF4 (via C-terminus); this interaction is important for infectious virion production. Interacts with host TYK2; this interaction participates to the inhibition of host type I IFN signaling. Interacts with host STAT1; this interaction leads to STAT1 dephosphorylation and inhibition. Interacts with host STAT2; this interaction leads to STAT2 degradation. Interacts with host CUL1; this interaction might facilitate CUL1 recruitment to STAT2, leading to ubiquitination and degradation of the latter. Interacts with host AGO2; this interaction participates to the host miRNA regulation leading to enhanced SUMOylation.

It localises to the virion tegument. Its subcellular location is the host cytoplasm. The protein resides in the host nucleus. The protein localises to the host Golgi apparatus. It is found in the host trans-Golgi network. Plays a critical role in cytoplasmic virus egress. Participates in the final step of tegumentation and envelope acquisition within the host cytoplasm by directly interacting with the capsid. Upon virion binding to target cell, a signaling cascade is triggered to disrupt the interaction with the capsid, thereby preparing capsid uncoating. Activates the AP-1 pathway and enhances EBV reactivation and virus release. Inhibits type I IFN-induced TYK2, STAT1 and STAT3 phosphorylation, thereby impairing type I IFN signaling and counteracting the ability of IFN-alpha to suppress the reactivation of EBV. Recruits SHP1 phosphatase to dephosphorylate STAT1. Mediates STAT2 ubiquitination and proteasomal degradation. Also suppresses type II and type III IFN signaling. Contributes to G1/S arrest in the host cell. Acts as an miRNA regulator that interferes with the function of RISC in miRNA-mediated mRNA silencing. As a result, SUMOylation is increased. When encapsulated in the exosomes released by EBV-infected host cells, may facilitate the infection in recipient cells. This is Cytoplasmic envelopment protein 2 from Epstein-Barr virus (strain AG876) (HHV-4).